Reading from the N-terminus, the 194-residue chain is E3 ubiquitin-protein ligase RNF185 (194 aa).

A disordered region spans residues methionine 1–asparagine 32. The interval aspartate 31 to lysine 82 is required for ubiquitin ligase activity and protection against ER stress-induced cell death. An RING-type zinc finger spans residues cysteine 41 to lysine 82. Residues proline 92–phenylalanine 125 are disordered. 2 helical membrane-spanning segments follow: residues glycine 133–phenylalanine 153 and glutamine 174–alanine 194.

It is found in the mitochondrion outer membrane. Its subcellular location is the endoplasmic reticulum membrane. It catalyses the reaction S-ubiquitinyl-[E2 ubiquitin-conjugating enzyme]-L-cysteine + [acceptor protein]-L-lysine = [E2 ubiquitin-conjugating enzyme]-L-cysteine + N(6)-ubiquitinyl-[acceptor protein]-L-lysine.. It functions in the pathway protein modification; protein ubiquitination. Functionally, E3 ubiquitin-protein ligase that regulates selective mitochondrial autophagy by mediating 'Lys-63'-linked polyubiquitination. Acts in the endoplasmic reticulum (ER)-associated degradation (ERAD) pathway, which targets misfolded proteins that accumulate in the endoplasmic reticulum (ER) for ubiquitination and subsequent proteasome-mediated degradation. Protects cells from ER stress-induced apoptosis. Responsible for the cotranslational ubiquitination and degradation of CFTR in the ERAD pathway. Also acts as a regulator of the innate antiviral response by catalyzing 'Lys-27'-linked polyubiquitination of CGAS, thereby promoting CGAS cyclic GMP-AMP synthase activity. Preferentially associates with the E2 enzymes UBE2J1 and UBE2J2. The chain is E3 ubiquitin-protein ligase RNF185 (RNF185) from Gallus gallus (Chicken).